The following is a 366-amino-acid chain: Inhibin alpha chain (366 aa).

A signal peptide spans 1–20 (MVSQRSLLLLLLLTLRDVDS). A propeptide spanning residues 21–63 (CQGPELVRELVLAKVKALFLDALGPPAMDGEGGDPGIRRLPRR) is cleaved from the precursor. A propeptide spans 64-233 (HAVGGFMHRT…APSAGERARR (170 aa)) (inhibin alpha N-terminal region). 2 N-linked (GlcNAc...) asparagine glycosylation sites follow: asparagine 147 and asparagine 269. Intrachain disulfides connect cysteine 263-cysteine 328, cysteine 292-cysteine 363, and cysteine 296-cysteine 365.

The protein belongs to the TGF-beta family. Dimeric, linked by one or more disulfide bonds. Activin B is a dimer of alpha and beta-B. Inhibin A is a dimer of alpha and beta-A. Inhibin B is a dimer of alpha and beta-B. Interacts with TGFBR3L; this interaction regulates female fertility. Proteolytic processing yields a number of bioactive forms, consisting either solely of the mature alpha chain, of the most N-terminal propeptide linked through a disulfide bond to the mature alpha chain, or of the entire proprotein.

It localises to the secreted. Functionally, inhibins and activins inhibit and activate, respectively, the secretion of follitropin by the pituitary gland. Inhibins/activins are involved in regulating a number of diverse functions such as hypothalamic and pituitary hormone secretion, gonadal hormone secretion, germ cell development and maturation, erythroid differentiation, insulin secretion, nerve cell survival, embryonic axial development or bone growth, depending on their subunit composition. Inhibins appear to oppose the functions of activins. Its function is as follows. Inhibin A is a dimer of alpha/INHA and beta-A/INHBA that functions as a feedback regulator in the hypothalamic-pituitary-gonadal (HPG) axis. Inhibits the secretion of FSH from the anterior pituitary gland by acting on pituitary gonadotrope cells. Antagonizes activin A by binding to the proteoglycan, betaglycan, and forming a stable complex with and, thereby, sequestering type II activin receptors while excluding type I receptor. Inhibin B is a dimer of alpha and beta-B that plays a crucial role in the regulation of the reproductive system by inhibiting the secretion of follicle-stimulating hormone (FSH) from the anterior pituitary gland. Thereby, maintains reproductive homeostasis in both males and females. Acts as a more potent suppressor of FSH release than inhibin A. Functions as competitive receptor antagonist binding activin type II receptors with high affinity in the presence of the TGF-beta type III coreceptor/TGFBR3L. In Mus musculus (Mouse), this protein is Inhibin alpha chain (Inha).